The sequence spans 879 residues: Phosphoenolpyruvate carboxylase (879 aa).

Residues histidine 138 and lysine 546 contribute to the active site.

It belongs to the PEPCase type 1 family. Mg(2+) serves as cofactor.

It catalyses the reaction oxaloacetate + phosphate = phosphoenolpyruvate + hydrogencarbonate. In terms of biological role, forms oxaloacetate, a four-carbon dicarboxylic acid source for the tricarboxylic acid cycle. This is Phosphoenolpyruvate carboxylase from Pectobacterium carotovorum subsp. carotovorum (strain PC1).